Reading from the N-terminus, the 157-residue chain is Rieske domain-containing protein (157 aa).

Met1 is modified (N-acetylmethionine). Ser6 bears the Phosphoserine mark. Rieske domains follow at residues 16-127 (TSVC…VDNG) and 17-131 (SVCV…NIYV). [2Fe-2S] cluster contacts are provided by Cys57, His59, Cys80, and His83.

The cofactor is [2Fe-2S] cluster.

The protein is Rieske domain-containing protein (Rfesd) of Mus musculus (Mouse).